Here is a 561-residue protein sequence, read N- to C-terminus: DNA ligase B (561 aa).

The N6-AMP-lysine intermediate role is filled by K125.

The protein belongs to the NAD-dependent DNA ligase family. LigB subfamily.

It catalyses the reaction NAD(+) + (deoxyribonucleotide)n-3'-hydroxyl + 5'-phospho-(deoxyribonucleotide)m = (deoxyribonucleotide)n+m + AMP + beta-nicotinamide D-nucleotide.. Catalyzes the formation of phosphodiester linkages between 5'-phosphoryl and 3'-hydroxyl groups in double-stranded DNA using NAD as a coenzyme and as the energy source for the reaction. The protein is DNA ligase B of Salmonella newport (strain SL254).